Consider the following 282-residue polypeptide: Acetylglutamate kinase (282 aa).

Substrate-binding positions include 62–63, R84, and N178; that span reads GG.

This sequence belongs to the acetylglutamate kinase family. ArgB subfamily.

It localises to the cytoplasm. It catalyses the reaction N-acetyl-L-glutamate + ATP = N-acetyl-L-glutamyl 5-phosphate + ADP. The protein operates within amino-acid biosynthesis; L-arginine biosynthesis; N(2)-acetyl-L-ornithine from L-glutamate: step 2/4. Its function is as follows. Catalyzes the ATP-dependent phosphorylation of N-acetyl-L-glutamate. This chain is Acetylglutamate kinase, found in Thermotoga sp. (strain RQ2).